The chain runs to 165 residues: NADPH-dependent 7-cyano-7-deazaguanine reductase (165 aa).

Cys56 serves as the catalytic Thioimide intermediate. Asp63 acts as the Proton donor in catalysis. Substrate contacts are provided by residues 78–80 and 97–98; these read VES and HE. Asp163 and Arg165 together coordinate Mg(2+).

The protein belongs to the GTP cyclohydrolase I family. QueF type 1 subfamily. As to quaternary structure, forms an asymmetric tunnel-fold homodecamer of two head-to-head facing pentamers, harboring 10 active sites at the intersubunit interfaces. Does not require a metal cofactor. is required as a cofactor.

It is found in the cytoplasm. It catalyses the reaction 7-aminomethyl-7-carbaguanine + 2 NADP(+) = 7-cyano-7-deazaguanine + 2 NADPH + 3 H(+). Its pathway is tRNA modification; tRNA-queuosine biosynthesis. Its activity is regulated as follows. Activity is strongly inhibited by Cu(2+) and Fe(3+). Its function is as follows. Catalyzes the NADPH-dependent reduction of 7-cyano-7-deazaguanine (preQ0) to 7-aminomethyl-7-deazaguanine (preQ1), a late step in the queuosine pathway. The protein is NADPH-dependent 7-cyano-7-deazaguanine reductase (queF) of Bacillus subtilis (strain 168).